Consider the following 416-residue polypeptide: Enterobactin exporter EntS (416 aa).

Residues Met-1–Ala-21 are Cytoplasmic-facing. The chain crosses the membrane as a helical span at residues Val-22–Val-42. Residues Gln-43–Gly-55 are Periplasmic-facing. A helical transmembrane segment spans residues Leu-56 to Ala-76. The Cytoplasmic portion of the chain corresponds to Asp-77–Lys-83. The chain crosses the membrane as a helical span at residues Val-84–Leu-104. Over Leu-105–Ser-109 the chain is Periplasmic. The chain crosses the membrane as a helical span at residues Leu-110–Ala-130. Topologically, residues Leu-131–Arg-156 are cytoplasmic. Residues Leu-157–Trp-177 traverse the membrane as a helical segment. Asn-178 is a topological domain (periplasmic). A helical transmembrane segment spans residues Tyr-179–Leu-199. The Cytoplasmic segment spans residues Pro-200–Arg-218. A helical transmembrane segment spans residues Phe-219 to Ala-239. Over Ser-240 to Ser-256 the chain is Periplasmic. The chain crosses the membrane as a helical span at residues Ala-257–Thr-277. Residues Ser-278–Pro-287 are Cytoplasmic-facing. Residues Gly-288 to Leu-307 traverse the membrane as a helical segment. Over Met-308–Leu-313 the chain is Periplasmic. Residues Gly-314–Leu-336 traverse the membrane as a helical segment. At Gln-337 to Asn-356 the chain is on the cytoplasmic side. The chain crosses the membrane as a helical span at residues Val-357 to Val-377. Residue Ala-378 is a topological domain, periplasmic. A helical membrane pass occupies residues Ser-379–Val-399. Over Glu-400–Ser-416 the chain is Cytoplasmic.

It belongs to the major facilitator superfamily. EntS (TC 2.A.1.38) family.

The protein localises to the cell inner membrane. Component of an export pathway for enterobactin. This chain is Enterobactin exporter EntS, found in Shigella boydii serotype 18 (strain CDC 3083-94 / BS512).